The sequence spans 607 residues: Elongation factor 4 (607 aa).

The tr-type G domain maps to 11–193 (EKIRNFSIIA…QIVEKVPAPQ (183 aa)). Residues 23-28 (DHGKST) and 140-143 (NKID) each bind GTP.

Belongs to the TRAFAC class translation factor GTPase superfamily. Classic translation factor GTPase family. LepA subfamily.

It is found in the cell membrane. The catalysed reaction is GTP + H2O = GDP + phosphate + H(+). Its function is as follows. Required for accurate and efficient protein synthesis under certain stress conditions. May act as a fidelity factor of the translation reaction, by catalyzing a one-codon backward translocation of tRNAs on improperly translocated ribosomes. Back-translocation proceeds from a post-translocation (POST) complex to a pre-translocation (PRE) complex, thus giving elongation factor G a second chance to translocate the tRNAs correctly. Binds to ribosomes in a GTP-dependent manner. This is Elongation factor 4 from Lactococcus lactis subsp. cremoris (strain SK11).